We begin with the raw amino-acid sequence, 505 residues long: Apolipoprotein N-acyltransferase (505 aa).

6 helical membrane-spanning segments follow: residues 26 to 46 (FAPYQLWPIAILSPAILLILL), 66 to 86 (FATGVSWVYVSISGFGGMPLI), 89 to 109 (LFLMGMLIAYLAVYSGLFAWL), 129 to 149 (LWLITDWLRGWVMTGFPWLWL), 161 to 181 (FAPIGGVELLTLFVLISAGAL), and 186 to 206 (IHKQWLMIIIPVVLMSAGFGI). The 247-residue stretch at 225–471 (IQGNVDQNLK…TAVLRAELTP (247 aa)) folds into the CN hydrolase domain. Glu-264 serves as the catalytic Proton acceptor. Residue Lys-330 is part of the active site. The active-site Nucleophile is the Cys-382. The helical transmembrane segment at 481–501 (FGTWPLYFWVALSLMLAWWLP) threads the bilayer.

It belongs to the CN hydrolase family. Apolipoprotein N-acyltransferase subfamily.

The protein resides in the cell inner membrane. The catalysed reaction is N-terminal S-1,2-diacyl-sn-glyceryl-L-cysteinyl-[lipoprotein] + a glycerophospholipid = N-acyl-S-1,2-diacyl-sn-glyceryl-L-cysteinyl-[lipoprotein] + a 2-acyl-sn-glycero-3-phospholipid + H(+). It participates in protein modification; lipoprotein biosynthesis (N-acyl transfer). Its function is as follows. Catalyzes the phospholipid dependent N-acylation of the N-terminal cysteine of apolipoprotein, the last step in lipoprotein maturation. The chain is Apolipoprotein N-acyltransferase from Vibrio parahaemolyticus serotype O3:K6 (strain RIMD 2210633).